The following is a 475-amino-acid chain: Melanopsin (475 aa).

The Extracellular segment spans residues 1–21 (MGTQHRIKVDVPDRVLYTVGS). Residues 22 to 42 (CVLVIGSIGITGNLLVLYAFY) traverse the membrane as a helical segment. At 43–53 (SNKRLRTPANY) the chain is on the cytoplasmic side. Residues 54–74 (FIMNLAASDFLMSATQAPICF) traverse the membrane as a helical segment. Over 75 to 90 (LNSMHTEWILGDIGCN) the chain is Extracellular. The cysteines at positions 89 and 167 are disulfide-linked. A helical membrane pass occupies residues 91–111 (FYVFCGALFGITSMMTLLAIS). At 112–134 (VDRYCVITKPLQSIKRSSKKRSC) the chain is on the cytoplasmic side. The helical transmembrane segment at 135–155 (IIIAFVWLYSLGWSVCPLFGW) threads the bilayer. The Extracellular portion of the chain corresponds to 156-187 (SSYIPEGLMISCTWDYVSYSPANRSYTMMLCC). The N-linked (GlcNAc...) asparagine glycan is linked to Asn178. The helical transmembrane segment at 188 to 208 (FVFFIPLIIIFHCYLFMFLAI) threads the bilayer. Topologically, residues 209–240 (RSTGRNVQKLGSTYNRKSNVSQSVKSEWKLAK) are cytoplasmic. Residues 241 to 261 (IAFVAIVVFVLSWSPYACVTL) traverse the membrane as a helical segment. The Extracellular segment spans residues 262–276 (IAWAGYAKTLNPYSK). A helical membrane pass occupies residues 277 to 297 (SVPAVIAKASAIYNPIIYAII). Lys284 is modified (N6-(retinylidene)lysine). The Cytoplasmic portion of the chain corresponds to 298-475 (HPRYRRTIRS…EQHQMEASSH (178 aa)). Disordered regions lie at residues 370–390 (VEAA…KQAE) and 445–475 (PFGL…ASSH). Basic residues predominate over residues 375 to 384 (KKQQPHRSRS). Over residues 445–454 (PFGLNSSSTE) the composition is skewed to polar residues. Positions 455–464 (ENADTSDMEV) are enriched in acidic residues. Residues 465–475 (QEQHQMEASSH) show a composition bias toward basic and acidic residues.

It belongs to the G-protein coupled receptor 1 family. Opsin subfamily. In terms of tissue distribution, highest level in the lateral eye. Low level in the brain.

It localises to the cell membrane. Its function is as follows. Photoreceptor implicated in non-image-forming responses to light. May be able to isomerize covalently bound all-trans retinal back to 11-cis retinal. The protein is Melanopsin (OPN4) of Podarcis siculus (Italian wall lizard).